The primary structure comprises 613 residues: Dihydroxy-acid dehydratase (613 aa).

Residue D81 participates in Mg(2+) binding. A [2Fe-2S] cluster-binding site is contributed by C122. The Mg(2+) site is built by D123 and K124. Residue K124 is modified to N6-carboxylysine. C195 serves as a coordination point for [2Fe-2S] cluster. E491 serves as a coordination point for Mg(2+). S517 acts as the Proton acceptor in catalysis.

The protein belongs to the IlvD/Edd family. Homodimer. It depends on [2Fe-2S] cluster as a cofactor. Requires Mg(2+) as cofactor.

It catalyses the reaction (2R)-2,3-dihydroxy-3-methylbutanoate = 3-methyl-2-oxobutanoate + H2O. The enzyme catalyses (2R,3R)-2,3-dihydroxy-3-methylpentanoate = (S)-3-methyl-2-oxopentanoate + H2O. It functions in the pathway amino-acid biosynthesis; L-isoleucine biosynthesis; L-isoleucine from 2-oxobutanoate: step 3/4. The protein operates within amino-acid biosynthesis; L-valine biosynthesis; L-valine from pyruvate: step 3/4. In terms of biological role, functions in the biosynthesis of branched-chain amino acids. Catalyzes the dehydration of (2R,3R)-2,3-dihydroxy-3-methylpentanoate (2,3-dihydroxy-3-methylvalerate) into 2-oxo-3-methylpentanoate (2-oxo-3-methylvalerate) and of (2R)-2,3-dihydroxy-3-methylbutanoate (2,3-dihydroxyisovalerate) into 2-oxo-3-methylbutanoate (2-oxoisovalerate), the penultimate precursor to L-isoleucine and L-valine, respectively. The sequence is that of Dihydroxy-acid dehydratase from Vibrio cholerae serotype O1 (strain ATCC 39541 / Classical Ogawa 395 / O395).